The sequence spans 192 residues: Imidazoleglycerol-phosphate dehydratase (192 aa).

It belongs to the imidazoleglycerol-phosphate dehydratase family.

Its subcellular location is the cytoplasm. The catalysed reaction is D-erythro-1-(imidazol-4-yl)glycerol 3-phosphate = 3-(imidazol-4-yl)-2-oxopropyl phosphate + H2O. The protein operates within amino-acid biosynthesis; L-histidine biosynthesis; L-histidine from 5-phospho-alpha-D-ribose 1-diphosphate: step 6/9. This is Imidazoleglycerol-phosphate dehydratase from Hydrogenobaculum sp. (strain Y04AAS1).